A 533-amino-acid polypeptide reads, in one-letter code: Probable nucleolar protein 5-2 (533 aa).

The Nop domain maps to 281 to 399 (IAPNLTALVG…LEARLRNLEG (119 aa)). Disordered regions lie at residues 401 to 433 (DLGR…ITPA) and 445 to 533 (GETS…KSKD). A compositionally biased stretch (basic and acidic residues) spans 413-424 (PKIEVYNKDKKM). The segment covering 521-533 (KKDKKEKKKKSKD) has biased composition (basic residues).

Belongs to the NOP5/NOP56 family.

The protein localises to the nucleus. It is found in the nucleolus. Its function is as follows. Required for 60S ribosomal subunit biogenesis. The chain is Probable nucleolar protein 5-2 (NOP5-2) from Arabidopsis thaliana (Mouse-ear cress).